The chain runs to 266 residues: Pyrrolizixenacetamide deacetylase (266 aa).

Thr28 is an acetate binding site. Ser94 acts as the Nucleophile in catalysis. Leu95 contacts acetate. Catalysis depends on charge relay system residues Asp215 and His242. His242 serves as a coordination point for acetate.

The protein belongs to the AB hydrolase superfamily. As to quaternary structure, homodimer.

It catalyses the reaction pyrrolizixenacetamide + H2O = 3-amino-5,6,7,7a-tetrahydro-1H-pyrrolizin-1-one + acetate + H(+). In terms of biological role, involved in the biosynthetic pathway of pyrrolizwilline, a pyrrolizidine alkaloid. Catalyzes the N-deacetylation of pyrrolizixenacetamide. The polypeptide is Pyrrolizixenacetamide deacetylase (Xenorhabdus hominickii).